The sequence spans 425 residues: Synaptotagmin-4 (425 aa).

The Vesicular portion of the chain corresponds to 1–16; the sequence is MAPITTSRVEFDEIPT. The chain crosses the membrane as a helical span at residues 17–37; it reads VVGIFSAFGLVFTVSLFAWIC. Topologically, residues 38-425 are cytoplasmic; it reads CQRRSAKSNK…IAKWHMLCDG (388 aa). Residues 127-147 form a disordered region; it reads TETEKEANSPESLKSSTSLTS. Serine 135 is subject to Phosphoserine; by MAPK8. The span at 137-146 shows a compositional bias: low complexity; it reads ESLKSSTSLT. C2 domains lie at 153-274 and 287-420; these read KLGT…MLMT and GRGE…AKWH. Aspartate 246, serine 249, and aspartate 252 together coordinate Ca(2+).

This sequence belongs to the synaptotagmin family. In terms of assembly, interacts with KIF1A; the interaction increases in presence of calcium and decreases when SYT4 is phosphorylated at Ser-135. The cofactor is Ca(2+). Phosphorylation at Ser-135 by MAPK8/JNK1 reduces interaction with KIF1A and neuronal dense core vesicles mobility. As to expression, expressed in many regions of the nervous system but is undetectable in extra neural tissues.

The protein resides in the cytoplasmic vesicle. It is found in the secretory vesicle. It localises to the neuronal dense core vesicle membrane. Functionally, synaptotagmin family member which does not bind Ca(2+). Plays a role in dendrite formation by melanocytes. In terms of biological role, synaptotagmin family member which does not bind Ca(2+). Involved in neuronal dense core vesicles (DCVs) mobility through its interaction with KIF1A. Upon increased neuronal activity, phosphorylation by MAPK8/JNK1 destabilizes the interaction with KIF1A and captures DCVs to synapses. Plays a role in dendrite formation by melanocytes. The polypeptide is Synaptotagmin-4 (Syt4) (Mus musculus (Mouse)).